Reading from the N-terminus, the 721-residue chain is Exocyst complex component 3-like protein 4 (721 aa).

Disordered regions lie at residues 1–52 (MPLP…SLGM) and 94–135 (GLTA…QAES). A compositionally biased stretch (polar residues) spans 22-37 (SQTLPVTTWKSNSMKE). Residue S515 is modified to Phosphoserine.

This sequence belongs to the SEC6 family.

The protein is Exocyst complex component 3-like protein 4 (Exoc3l4) of Mus musculus (Mouse).